A 234-amino-acid chain; its full sequence is Leucyl/phenylalanyl-tRNA--protein transferase (234 aa).

The protein belongs to the L/F-transferase family.

The protein resides in the cytoplasm. It catalyses the reaction N-terminal L-lysyl-[protein] + L-leucyl-tRNA(Leu) = N-terminal L-leucyl-L-lysyl-[protein] + tRNA(Leu) + H(+). The enzyme catalyses N-terminal L-arginyl-[protein] + L-leucyl-tRNA(Leu) = N-terminal L-leucyl-L-arginyl-[protein] + tRNA(Leu) + H(+). It carries out the reaction L-phenylalanyl-tRNA(Phe) + an N-terminal L-alpha-aminoacyl-[protein] = an N-terminal L-phenylalanyl-L-alpha-aminoacyl-[protein] + tRNA(Phe). In terms of biological role, functions in the N-end rule pathway of protein degradation where it conjugates Leu, Phe and, less efficiently, Met from aminoacyl-tRNAs to the N-termini of proteins containing an N-terminal arginine or lysine. The polypeptide is Leucyl/phenylalanyl-tRNA--protein transferase (Tolumonas auensis (strain DSM 9187 / NBRC 110442 / TA 4)).